The primary structure comprises 158 residues: Cyclic pyranopterin monophosphate synthase (158 aa).

Substrate contacts are provided by residues methionine 76–histidine 78 and methionine 114–glutamate 115. The active site involves aspartate 129.

It belongs to the MoaC family. Homohexamer; trimer of dimers.

It carries out the reaction (8S)-3',8-cyclo-7,8-dihydroguanosine 5'-triphosphate = cyclic pyranopterin phosphate + diphosphate. It functions in the pathway cofactor biosynthesis; molybdopterin biosynthesis. Its function is as follows. Catalyzes the conversion of (8S)-3',8-cyclo-7,8-dihydroguanosine 5'-triphosphate to cyclic pyranopterin monophosphate (cPMP). This Clostridium perfringens (strain SM101 / Type A) protein is Cyclic pyranopterin monophosphate synthase.